Consider the following 314-residue polypeptide: DNA-directed RNA polymerase subunit alpha (314 aa).

The alpha N-terminal domain (alpha-NTD) stretch occupies residues 1-228 (MAQFHYECVE…SLFEPLKDIT (228 aa)). An alpha C-terminal domain (alpha-CTD) region spans residues 240 to 314 (DPTSQIPIEE…LPQEKVAKAT (75 aa)).

The protein belongs to the RNA polymerase alpha chain family. In terms of assembly, in cyanobacteria the RNAP catalytic core is composed of 2 alpha, 1 beta, 1 beta', 1 gamma and 1 omega subunit. When a sigma factor is associated with the core the holoenzyme is formed, which can initiate transcription.

The enzyme catalyses RNA(n) + a ribonucleoside 5'-triphosphate = RNA(n+1) + diphosphate. DNA-dependent RNA polymerase catalyzes the transcription of DNA into RNA using the four ribonucleoside triphosphates as substrates. In Trichodesmium erythraeum (strain IMS101), this protein is DNA-directed RNA polymerase subunit alpha.